A 2304-amino-acid chain; its full sequence is Protein Ycf2 (2304 aa).

Position 1637–1644 (1637–1644 (GSIGTGRS)) interacts with ATP.

Belongs to the Ycf2 family.

The protein resides in the plastid. It localises to the chloroplast stroma. Probable ATPase of unknown function. Its presence in a non-photosynthetic plant (Epifagus virginiana) and experiments in tobacco indicate that it has an essential function which is probably not related to photosynthesis. In Amborella trichopoda, this protein is Protein Ycf2.